The following is a 509-amino-acid chain: Probable xyloglucan galactosyltransferase GT12 (509 aa).

Topologically, residues 1-3 (MMK) are cytoplasmic. Residues 4–24 (PVPKLWVVISSAFVFCLLVLF) traverse the membrane as a helical; Signal-anchor for type II membrane protein segment. Residues 25–509 (QINKSDLIEA…KLEIIHEKTA (485 aa)) lie on the Lumenal side of the membrane. N-linked (GlcNAc...) asparagine glycosylation is found at N27, N59, N65, N169, N170, N195, N257, and N416.

The protein belongs to the glycosyltransferase 47 family. As to expression, expressed in pollen grains.

It localises to the golgi apparatus membrane. Functions in xyloglucan synthesis by adding side chains to the xylosylated glucan backbone. Involved in the galactosylation of hemicellulose xyloglucan. This chain is Probable xyloglucan galactosyltransferase GT12, found in Arabidopsis thaliana (Mouse-ear cress).